A 778-amino-acid chain; its full sequence is Aconitate hydratase, mitochondrial (778 aa).

A mitochondrion-targeting transit peptide spans 1–16 (MLSARSAIKRPIVRGL). Residues Gln95 and 188 to 190 (DSH) each bind substrate. Cys382 provides a ligand contact to [4Fe-4S] cluster. Residue Ser391 is modified to Phosphoserine. Position 409 is a phosphothreonine (Thr409). [4Fe-4S] cluster-binding residues include Cys445 and Cys448. The substrate site is built by Arg471 and Arg476. Ser556 is modified (phosphoserine). Residues Arg604 and 667–668 (SR) each bind substrate.

This sequence belongs to the aconitase/IPM isomerase family. As to quaternary structure, monomer. Binds to mitochondrial DNA (mtDNA) and identified as component of mitochondrial nucleoids. The cofactor is [4Fe-4S] cluster.

The protein resides in the mitochondrion. It localises to the cytoplasm. It catalyses the reaction citrate = D-threo-isocitrate. It participates in carbohydrate metabolism; tricarboxylic acid cycle; isocitrate from oxaloacetate: step 2/2. With respect to regulation, subject to catabolite regulation. Functionally, catalyzes the isomerization of citrate to isocitrate via cis-aconitate, a step in the citric acid cycle. Can also provide minor contributions to the reversible dehydration of (R)-homocitrate to cis-homoaconitate, a step in the alpha-aminoadipate pathway for lysine biosynthesis. Also plays an essential role in mtDNA maintenance. May directly protect mtDNA from accumulation of point mutations and ssDNA breaks as a component of mitochondrial nucleoids, or by preventing accumulation of iron citrate thereby alleviating its detrimental effects in mitochondria. The polypeptide is Aconitate hydratase, mitochondrial (Saccharomyces cerevisiae (strain ATCC 204508 / S288c) (Baker's yeast)).